We begin with the raw amino-acid sequence, 347 residues long: Isopentenyl-diphosphate delta-isomerase (347 aa).

9 to 10 (RK) lines the substrate pocket. FMN contacts are provided by residues 65–67 (AMT), serine 95, and asparagine 124. Substrate is bound at residue 95 to 97 (STH). Position 154 (glutamine 154) interacts with substrate. Glutamate 155 is a Mg(2+) binding site. FMN-binding positions include lysine 186, serine 211, threonine 216, 262–264 (GVR), and 283–284 (SR).

It belongs to the IPP isomerase type 2 family. In terms of assembly, homooctamer. Dimer of tetramers. It depends on FMN as a cofactor. NADPH is required as a cofactor. The cofactor is Mg(2+).

The protein resides in the cytoplasm. The enzyme catalyses isopentenyl diphosphate = dimethylallyl diphosphate. In terms of biological role, involved in the biosynthesis of isoprenoids. Catalyzes the 1,3-allylic rearrangement of the homoallylic substrate isopentenyl (IPP) to its allylic isomer, dimethylallyl diphosphate (DMAPP). This is Isopentenyl-diphosphate delta-isomerase from Staphylococcus saprophyticus subsp. saprophyticus (strain ATCC 15305 / DSM 20229 / NCIMB 8711 / NCTC 7292 / S-41).